The following is a 164-amino-acid chain: Interleukin-31 (164 aa).

The first 23 residues, 1–23 (MASHSGPSTSVLFLFCCLGGWLA), serve as a signal peptide directing secretion. N-linked (GlcNAc...) asparagine glycosylation is found at N67 and N100.

In terms of tissue distribution, detected at low levels in testis, bone marrow, skeletal muscle, kidney, colon, thymus, small intestine and trachea.

Its subcellular location is the secreted. In terms of biological role, activates STAT3 and possibly STAT1 and STAT5 through the IL31 heterodimeric receptor composed of IL31RA and OSMR. May function in skin immunity. Enhances myeloid progenitor cell survival in vitro. Induces RETNLA and serum amyloid A protein expression in macrophages. In Homo sapiens (Human), this protein is Interleukin-31 (IL31).